We begin with the raw amino-acid sequence, 454 residues long: tRNA modification GTPase MnmE (454 aa).

The (6S)-5-formyl-5,6,7,8-tetrahydrofolate site is built by arginine 23, glutamate 80, and lysine 120. The TrmE-type G domain occupies 216 to 377; it reads GMKVVIAGRP…LRNHLKQSMG (162 aa). Asparagine 226 is a binding site for K(+). GTP contacts are provided by residues 226–231, 245–251, 270–273, 335–338, and 358–360; these read NAGKSS, TDIAGTT, DTAG, NKAD, and SAR. Mg(2+) is bound at residue serine 230. 3 residues coordinate K(+): threonine 245, isoleucine 247, and threonine 250. Threonine 251 contacts Mg(2+). Residue lysine 454 coordinates (6S)-5-formyl-5,6,7,8-tetrahydrofolate.

This sequence belongs to the TRAFAC class TrmE-Era-EngA-EngB-Septin-like GTPase superfamily. TrmE GTPase family. In terms of assembly, homodimer. Heterotetramer of two MnmE and two MnmG subunits. The cofactor is K(+).

Its subcellular location is the cytoplasm. Exhibits a very high intrinsic GTPase hydrolysis rate. Involved in the addition of a carboxymethylaminomethyl (cmnm) group at the wobble position (U34) of certain tRNAs, forming tRNA-cmnm(5)s(2)U34. The protein is tRNA modification GTPase MnmE of Salmonella choleraesuis (strain SC-B67).